A 454-amino-acid chain; its full sequence is Bifunctional protein GlmU (454 aa).

A pyrophosphorylase region spans residues 1 to 226 (MALNVVILAA…AVEVEGANNR (226 aa)). UDP-N-acetyl-alpha-D-glucosamine-binding positions include 8-11 (LAAG), K22, Q73, 78-79 (GT), 100-102 (YGD), G137, E151, N166, and N224. D102 contributes to the Mg(2+) binding site. N224 is a binding site for Mg(2+). A linker region spans residues 227–247 (VQLAQLERAYQARAAEKLMLE). The interval 248-454 (GANLRDPARI…GWPRPVKLKK (207 aa)) is N-acetyltransferase. Residues R330 and K348 each contribute to the UDP-N-acetyl-alpha-D-glucosamine site. The active-site Proton acceptor is the H360. The UDP-N-acetyl-alpha-D-glucosamine site is built by Y363 and N374. Acetyl-CoA is bound by residues A377, 383–384 (NY), S402, A420, and R437.

This sequence in the N-terminal section; belongs to the N-acetylglucosamine-1-phosphate uridyltransferase family. In the C-terminal section; belongs to the transferase hexapeptide repeat family. As to quaternary structure, homotrimer. The cofactor is Mg(2+).

It is found in the cytoplasm. The enzyme catalyses alpha-D-glucosamine 1-phosphate + acetyl-CoA = N-acetyl-alpha-D-glucosamine 1-phosphate + CoA + H(+). The catalysed reaction is N-acetyl-alpha-D-glucosamine 1-phosphate + UTP + H(+) = UDP-N-acetyl-alpha-D-glucosamine + diphosphate. It participates in nucleotide-sugar biosynthesis; UDP-N-acetyl-alpha-D-glucosamine biosynthesis; N-acetyl-alpha-D-glucosamine 1-phosphate from alpha-D-glucosamine 6-phosphate (route II): step 2/2. It functions in the pathway nucleotide-sugar biosynthesis; UDP-N-acetyl-alpha-D-glucosamine biosynthesis; UDP-N-acetyl-alpha-D-glucosamine from N-acetyl-alpha-D-glucosamine 1-phosphate: step 1/1. Its pathway is bacterial outer membrane biogenesis; LPS lipid A biosynthesis. Functionally, catalyzes the last two sequential reactions in the de novo biosynthetic pathway for UDP-N-acetylglucosamine (UDP-GlcNAc). The C-terminal domain catalyzes the transfer of acetyl group from acetyl coenzyme A to glucosamine-1-phosphate (GlcN-1-P) to produce N-acetylglucosamine-1-phosphate (GlcNAc-1-P), which is converted into UDP-GlcNAc by the transfer of uridine 5-monophosphate (from uridine 5-triphosphate), a reaction catalyzed by the N-terminal domain. The protein is Bifunctional protein GlmU of Shewanella pealeana (strain ATCC 700345 / ANG-SQ1).